Consider the following 236-residue polypeptide: Small ribosomal subunit protein uS3 (236 aa).

A KH type-2 domain is found at 39 to 107 (IRLYVLEELK…ETSLNIVEIH (69 aa)).

Belongs to the universal ribosomal protein uS3 family. In terms of assembly, part of the 30S ribosomal subunit. Forms a tight complex with proteins S10 and S14.

Binds the lower part of the 30S subunit head. Binds mRNA in the 70S ribosome, positioning it for translation. This Bartonella quintana (strain Toulouse) (Rochalimaea quintana) protein is Small ribosomal subunit protein uS3.